A 114-amino-acid chain; its full sequence is DNA-(apurinic or apyrimidinic site) endonuclease (114 aa).

It belongs to the apurinic/apyrimidinic endonuclease family. As to quaternary structure, interacts with host Ung; this interaction allows the viral AP endonuclease to localize to newly formed AP sites and cleave them, leading to inhibition of bacterial growth.

Functionally, performs endonucleolytic cleavage at abasic sites, which are generated by the base-excision activity of host Ung. The cleavage generates a 5'-deoxyribose phosphate and 3'-hydroxyl end. The sites are specifically recognized through the formation of a complex with host Ung. The viral endonucleolytic activity damages the host DNA, blocks host DNA replication and induces cell division arrest. This may provide an advantage for the phage and save nucleotides for the viral replication since it specifically targets the host DNA, which possesses more misincorporated uracils than the viral genome. In Escherichia phage T5 (Enterobacteria phage T5), this protein is DNA-(apurinic or apyrimidinic site) endonuclease.